A 266-amino-acid chain; its full sequence is 3',5'-cyclic-nucleotide phosphodiesterase alr5338 (266 aa).

Residues D14, H16, D56, N86, H155, H194, and H196 each coordinate Fe cation. Residues H16, D56, and 86-87 (NH) contribute to the AMP site. Residue H196 coordinates AMP.

This sequence belongs to the cyclic nucleotide phosphodiesterase class-III family. Fe(2+) serves as cofactor. Mn(2+) is required as a cofactor.

The enzyme catalyses a nucleoside 3',5'-cyclic phosphate + H2O = a nucleoside 5'-phosphate + H(+). The catalysed reaction is 3',5'-cyclic AMP + H2O = AMP + H(+). It catalyses the reaction 3',5'-cyclic GMP + H2O = GMP + H(+). Activated by iron and manganese. Its function is as follows. Hydrolyzes cAMP to 5'-AMP. Plays an important regulatory role in modulating the intracellular concentration of cAMP, thereby influencing cAMP-dependent processes. Can also hydrolyze cGMP. The chain is 3',5'-cyclic-nucleotide phosphodiesterase alr5338 from Nostoc sp. (strain PCC 7120 / SAG 25.82 / UTEX 2576).